Reading from the N-terminus, the 316-residue chain is Tyrosine recombinase XerC (316 aa).

One can recognise a Core-binding (CB) domain in the interval 11–97 (SGLRKPLDQF…SLRSFFDFLI (87 aa)). Residues 118–298 (PLPKNLDVDE…DFQHLADVYD (181 aa)) enclose the Tyr recombinase domain. Residues arginine 157, lysine 181, histidine 250, arginine 253, and histidine 276 contribute to the active site. The active-site O-(3'-phospho-DNA)-tyrosine intermediate is tyrosine 285.

It belongs to the 'phage' integrase family. XerC subfamily. In terms of assembly, forms a cyclic heterotetrameric complex composed of two molecules of XerC and two molecules of XerD.

Its subcellular location is the cytoplasm. Functionally, site-specific tyrosine recombinase, which acts by catalyzing the cutting and rejoining of the recombining DNA molecules. The XerC-XerD complex is essential to convert dimers of the bacterial chromosome into monomers to permit their segregation at cell division. It also contributes to the segregational stability of plasmids. In Vibrio vulnificus (strain CMCP6), this protein is Tyrosine recombinase XerC.